The chain runs to 465 residues: Argininosuccinate lyase (465 aa).

The protein belongs to the lyase 1 family. Argininosuccinate lyase subfamily.

Its subcellular location is the cytoplasm. It catalyses the reaction 2-(N(omega)-L-arginino)succinate = fumarate + L-arginine. The protein operates within amino-acid biosynthesis; L-arginine biosynthesis; L-arginine from L-ornithine and carbamoyl phosphate: step 3/3. The chain is Argininosuccinate lyase from Deinococcus deserti (strain DSM 17065 / CIP 109153 / LMG 22923 / VCD115).